Consider the following 308-residue polypeptide: MTSTSTTTNGDSFTVKAGLAQMLKGGVIMDVTTPAEARIAEEAGACAVMALERIPSDIRAAGGVARMSNPSMIKEIQAAVTIPVMAKARIGHVTECRILEQLGVDYIDESEVLTPADDTYHVQKDQFKAPFVCGCRNLGEALRRIKEGAAMIRTKGEAGTGDVVEAVKHIRTVNAEIAQAKAALASGGELAVAKMAREIGADVELLKKTAELGRLPVVNFAAGGVATPADAALMMEFGCDGVFVGSGIFKDAKTPEHALQRARAVVKAVANWNDYGALVEACIEHGEAMKGISNAGMKPEERMAGRGW.

Aspartate 30 is a D-ribose 5-phosphate binding site. Lysine 87 (schiff-base intermediate with D-ribose 5-phosphate) is an active-site residue. Position 159 (glycine 159) interacts with D-ribose 5-phosphate. Arginine 171 serves as a coordination point for D-glyceraldehyde 3-phosphate. D-ribose 5-phosphate is bound by residues glycine 224 and 245–246 (GS).

The protein belongs to the PdxS/SNZ family.

The enzyme catalyses aldehydo-D-ribose 5-phosphate + D-glyceraldehyde 3-phosphate + L-glutamine = pyridoxal 5'-phosphate + L-glutamate + phosphate + 3 H2O + H(+). Its pathway is cofactor biosynthesis; pyridoxal 5'-phosphate biosynthesis. In terms of biological role, catalyzes the formation of pyridoxal 5'-phosphate from ribose 5-phosphate (RBP), glyceraldehyde 3-phosphate (G3P) and ammonia. The ammonia is provided by pdx-2. Can also use ribulose 5-phosphate and dihydroxyacetone phosphate as substrates, resulting from enzyme-catalyzed isomerization of RBP and G3P, respectively. Also plays an indirect role in resistance to singlet oxygen-generating photosensitizers. The protein is Probable pyridoxal 5'-phosphate synthase subunit pdx-1 (pdx-1) of Neurospora crassa (strain ATCC 24698 / 74-OR23-1A / CBS 708.71 / DSM 1257 / FGSC 987).